The chain runs to 356 residues: Probable neutral protease 2 homolog ARB_04769 (356 aa).

A signal peptide spans 1 to 17 (MQFTALLAALGAPLALA). Residues 18 to 183 (ASIPAAAHNH…DDSTGVIDKR (166 aa)) constitute a propeptide that is removed on maturation. 2 disulfide bridges follow: cysteine 191/cysteine 262 and cysteine 269/cysteine 287. N-linked (GlcNAc...) asparagine glycosylation is present at asparagine 205. Residue histidine 311 coordinates Zn(2+). Residue glutamate 312 is part of the active site. 2 residues coordinate Zn(2+): histidine 315 and aspartate 326.

This sequence belongs to the peptidase M35 family. It depends on Zn(2+) as a cofactor.

It localises to the secreted. It catalyses the reaction Preferential cleavage of bonds with hydrophobic residues in P1'. Also 3-Asn-|-Gln-4 and 8-Gly-|-Ser-9 bonds in insulin B chain.. Functionally, probable secreted metalloprotease that shows high activities on basic nuclear substrates such as histone and protamine. May be involved in virulence. The sequence is that of Probable neutral protease 2 homolog ARB_04769 from Arthroderma benhamiae (strain ATCC MYA-4681 / CBS 112371) (Trichophyton mentagrophytes).